The following is a 652-amino-acid chain: Sodium-dependent nutrient amino acid transporter 1 (652 aa).

The segment at 1–54 (MELKGVHQQNGTSNGTGAVGAEGESAPPTAPATAEAAASLETTTEKVDAEQQKP) is disordered. At 1–58 (MELKGVHQQNGTSNGTGAVGAEGESAPPTAPATAEAAASLETTTEKVDAEQQKPERTN) the chain is on the cytoplasmic side. The segment covering 7–16 (HQQNGTSNGT) has biased composition (polar residues). The span at 21 to 42 (AEGESAPPTAPATAEAAASLET) shows a compositional bias: low complexity. Over residues 43–54 (TTEKVDAEQQKP) the composition is skewed to basic and acidic residues. A run of 4 helical transmembrane segments spans residues 59–79 (WGNG…LGNV), 92–112 (GAFL…MYYL), 130–150 (VVPG…CIIT), and 155–175 (LLAL…PWSY). 2 N-linked (GlcNAc...) asparagine glycosylation sites follow: N201 and N204. The next 9 helical transmembrane spans lie at 240-260 (PDWK…LVIM), 269-289 (AAYF…VRAV), 318-338 (AVVQ…MFAS), 352-372 (IVTT…FAIL), 412-432 (LFSV…IVAL), 458-478 (ICGF…ILTL), 485-505 (TYVV…IYGM), 527-547 (CWSF…MVTI), and 564-584 (AGWL…MWYI).

The protein belongs to the sodium:neurotransmitter symporter (SNF) (TC 2.A.22) family.

It is found in the membrane. In terms of biological role, unusual broad substrate spectrum amino acid:sodium cotransporter that promotes absorption of the D isomers of essential amino acids. Neutral amino acids are the preferred substrates, especially methionine and phenylalanine. In Drosophila persimilis (Fruit fly), this protein is Sodium-dependent nutrient amino acid transporter 1.